Reading from the N-terminus, the 279-residue chain is uncharacterized protein (279 aa).

The tract at residues 233–279 (NDHQLHDSPLCSDVSDSTSNNNYDESLNFSNDNNNSSFNDFDDDNFI) is disordered. Over residues 246–259 (VSDSTSNNNYDESL) the composition is skewed to polar residues. Over residues 260–271 (NFSNDNNNSSFN) the composition is skewed to low complexity.

This is an uncharacterized protein from Buchnera aphidicola subsp. Baizongia pistaciae (strain Bp).